A 351-amino-acid polypeptide reads, in one-letter code: Outer membrane porin PhoE (351 aa).

The first 21 residues, 1-21 (MKKSTLALVVMGIVASASVQA), serve as a signal peptide directing secretion.

The protein belongs to the Gram-negative porin family. As to quaternary structure, homotrimer. Forms mixed heterotrimers with OmpC and with OmpF; other mixed heterotrimers are also probable.

It is found in the cell outer membrane. Its function is as follows. Uptake of inorganic phosphate, phosphorylated compounds, and some other negatively charged solutes. In Escherichia coli (strain K12), this protein is Outer membrane porin PhoE (phoE).